We begin with the raw amino-acid sequence, 158 residues long: Retinoic acid receptor beta (158 aa).

Residues 1-18 (RHSAQSIETQSTSSEELV) show a composition bias toward low complexity. Residues 1 to 24 (RHSAQSIETQSTSSEELVPSPPSP) form a disordered region. Residues 31-106 (YKPCFVCQDK…VGMSKESVRN (76 aa)) constitute a DNA-binding region (nuclear receptor). 2 consecutive NR C4-type zinc fingers follow at residues 34–54 (CFVC…CEGC) and 70–94 (CHRD…LQRC). In terms of domain architecture, NR LBD spans 129-158 (ELDDLTEKIRKAHQETFPSLCQLGKYTTNS).

It belongs to the nuclear hormone receptor family. NR1 subfamily. Heterodimer; with a RXR molecule. Binds DNA preferentially as a RAR/RXR heterodimer.

The protein localises to the nucleus. Functionally, receptor for retinoic acid. Retinoic acid receptors bind as heterodimers to their target response elements in response to their ligands, all-trans or 9-cis retinoic acid, and regulate gene expression in various biological processes. The RAR/RXR heterodimers bind to the retinoic acid response elements (RARE) composed of tandem 5'-AGGTCA-3' sites known as DR1-DR5. This is Retinoic acid receptor beta (RARB) from Notophthalmus viridescens (Eastern newt).